A 1009-amino-acid polypeptide reads, in one-letter code: MWHFCEQVYECFEGYHRDYSVQTVPVEYLASHYIVNKFRPDPLAVLWLFCLGIWWEIIQILHHLFQYKEPALFVGSCQNLAAFLEKKYSMEVIQKEGLAASALKDKERLTEKAVVNQPLSNLIPHSNKMYERSKSLLSGLKRGLIKQKEIAFDKLMGGSTIDFQHIPTGTLTPGENKVLDIPIVPQHLLTSTNITDYHQANKKNANGATALHVGAIEVIMDCFTSPDSNICGGMLLVDTAHLNPDNAIRSVFVAPFIGGRPIRVLLFPDTLVEIAPNMNSRFKLLCTTSNGDVAPDFNLAMVKVNVAGCAVSLTRTYTPTAYLEQELIKEKGAIVQYLNRHTFSMHRNNQMTKEEMQKQRLSFRLESALTLQEKHPLHATFCKSTNFVYKIGGDAKEGSNGNLTVNESQLSSHSPSAHVLHKHNNSGDNEVEFSEIGVVVPGAGRTKAYGQNELDLAQLSLDDTSSLRGTALQTKLATSRIILSKTMVGNTVLREDLLATFLQDSNERAAIDLIRTHVIRGKIRCVASINVPENTGCALAICFNSGITGAADTDIYTTSSQDAIVWNPACEKAVELTFNPNPCGDAWNFVFLQQTKAHFAVQCVTGWTTTPLTDLALVLTWHIDRSLCVPKTLTISSAHASFPINRWMGKLSFPQGPARVLKRMPLAIGGGAGTKDAILMNMPNAVISLHRYFRGDFVFEITKMSSPYIKATIAFFIAFGDITEEMTNLESFPHKLVQFAEIQGRTTITFTQSEFLTAWSTQVLSTVNPQKDGCPHLYALLHDSATSTIEGNFVIGVKLLDIRNYRAYGHNPGFEGARLLGISGQSTMVQQLGTYNPIWMVRTPLESTAQQNFASFTADLMESTISGDSTGNWNITVYPSPIANLLKVAAWKKGTIRFQLICRGAAVKQSDWAASARIDLINNLSNKALPARSWYITKPRGGDIEFDLEIAGPNNGFEMANSSWAFQTTWYLEIAIDNPKQFTLFELNACLMEDFEVAGNTLNPPILLS.

Residues 387–393 are involved in tubule formation by the movement protein; sequence FVYKIGG.

As to quaternary structure, interacts with the large capsid protein. Interacts with the small capsid protein. Homomultimer; assembles as pentons. Interacts with the movement protein (via C-terminus). In terms of assembly, interacts (via C-terminus) with the large capsid protein. Specific enzymatic cleavages by picornain 3C-like protease in vivo yield mature proteins.

It localises to the host cell junction. The protein localises to the host plasmodesma. Its subcellular location is the virion. Its function is as follows. Responsible for viral RNA2 accumulation. May function by recruiting the RNA1-encoded polyprotein that contains the replication protein to RNA2 and enable its replication. In terms of biological role, transports the viral genome to neighboring plant cells directly through plasmosdesmata, without any budding. The movement protein allows efficient cell to cell propagation, by bypassing the host cell wall barrier. Acts by forming a tubular structure at the host plasmodesmata, enlarging it enough to allow free passage of virion capsids. Binds to GTP and to single-stranded RNA and single-stranded DNA in a non-sequence-specific manner. Functionally, together with the small capsid protein, forms an icosahedral capsid (T=3) enclosing the viral positive strand RNA genome, with a diameter of approximately 300 Angstroms. The capsid is formed from 60 copies each of the large and the small capsid protein. The large capsid protein interacts with the viral RNA. Together with the large capsid protein, forms an icosahedral capsid (T=3) enclosing the viral positive strand RNA genome, with a diameter of approximately 300 Angstroms. The capsid is formed from 60 copies each of the large and the small capsid protein. The small capsid protein forms the turrets at the fivefold axes of the viral particle. The chain is RNA2 polyprotein from Squash mosaic virus (strain melon) (SqMV).